The following is a 283-amino-acid chain: MTQTQPVGTLRLTIDDQGPQGQSRAVEQFHQGALRVIRPHYLDDSGQVCYTIIAIGGGYLGGDVYEQQFTIKDNAKALITTQSATKIYRTPQGPATQHTEINVGENAVLEYLADQTIAYREATYHQFTKVALHPSATFVMSEQITPGWHPDGKHFAYDEMRLHTEITDSTTGRLVLLDNLLLRPDSREGSFGWTEQYTHSGQMIVMGEGVDKQLVAELNEQLAAHPDVYGAVNFLSAPGTLLRGFIARTLSNRTEELINLHEHIASLLRGRWRGQEPVNLRKY.

The interval 1 to 21 (MTQTQPVGTLRLTIDDQGPQG) is disordered.

Belongs to the UreD family. In terms of assembly, ureD, UreF and UreG form a complex that acts as a GTP-hydrolysis-dependent molecular chaperone, activating the urease apoprotein by helping to assemble the nickel containing metallocenter of UreC. The UreE protein probably delivers the nickel.

The protein resides in the cytoplasm. Functionally, probably acts in the maturation of urease via the functional incorporation of the urease nickel metallocenter. Required for urease expression. The polypeptide is Urease accessory protein UreD (Corynebacterium glutamicum (strain ATCC 13032 / DSM 20300 / JCM 1318 / BCRC 11384 / CCUG 27702 / LMG 3730 / NBRC 12168 / NCIMB 10025 / NRRL B-2784 / 534)).